The sequence spans 200 residues: Coiled-coil domain-containing protein 28B (200 aa).

Met1 carries the N-acetylmethionine modification. Positions 1 to 10 are enriched in basic residues; the sequence is MEDKKKKRSP. Residues 1 to 49 form a disordered region; it reads MEDKKKKRSPKPCLTQPAQAPGTLRRVPVPTSHSGSLALGLPHLPSPKQ. Phosphoserine occurs at positions 46 and 115. Residues 140-152 are compositionally biased toward acidic residues; that stretch reads GEEEDEEEEEDGV. Residues 140–165 form a disordered region; that stretch reads GEEEDEEEEEDGVTEGLPEEQKKTMA. Residues 158–189 adopt a coiled-coil conformation; that stretch reads EEQKKTMADRNLDQLLSNLEDLSNSIQKLHLA.

Interacts with BBS1, BBS2, BBS4, BBS5, BBS6, BBS7 and TTC8/BBS8. Interacts with MAPKAP1/SIN1 isoform 1 and RICTOR. In terms of tissue distribution, expressed in the retina, pericardium and limb epithelium.

The protein localises to the cytoplasm. It localises to the cytoskeleton. Its subcellular location is the microtubule organizing center. It is found in the centrosome. In terms of biological role, involved in ciliogenesis. Regulates cilia length through its interaction with MAPKAP1/SIN1 but independently of mTORC2 complex. Modulates mTORC2 complex assembly and function, possibly enhances AKT1 phosphorylation. Does not seem to modulate assembly and function of mTORC1 complex. This is Coiled-coil domain-containing protein 28B (Ccdc28b) from Mus musculus (Mouse).